The primary structure comprises 554 residues: Formate--tetrahydrofolate ligase (554 aa).

Residue 65-72 (TPAGEGKT) participates in ATP binding.

The protein belongs to the formate--tetrahydrofolate ligase family.

It catalyses the reaction (6S)-5,6,7,8-tetrahydrofolate + formate + ATP = (6R)-10-formyltetrahydrofolate + ADP + phosphate. Its pathway is one-carbon metabolism; tetrahydrofolate interconversion. This is Formate--tetrahydrofolate ligase from Petrotoga mobilis (strain DSM 10674 / SJ95).